The following is a 284-amino-acid chain: MVSKIIKLGVPTATLAVGTLLLGDDEKRSAFFRTASAFTQNHGHKTFDEHFPRGEWDKNWDFRDPISLVDKGKWEKADEEGKKKLIEEKKATATRNIFLIRHGQYHLDHEVKMLTPLGREQAELLGKRLANSDIKFTNMTMSTMVRATETANIILKHLPDDLTRTSSPFIEEGPPYPPVPDHKTWRPLDPEFYTEAARIESAYRKIFHRASPSQKEDSFELIVCHANVIRYFICRALQFPPEGWLRMSLGNCSLTWITIRPKGHVSVRSIGDIGHLPPNKISFT.

A helical membrane pass occupies residues 8 to 24; it reads LGVPTATLAVGTLLLGD.

The protein belongs to the phosphoglycerate mutase family. BPG-dependent PGAM subfamily. As to quaternary structure, interacts with skn-1 isoforms a and c.

It is found in the mitochondrion outer membrane. The catalysed reaction is O-phospho-L-seryl-[protein] + H2O = L-seryl-[protein] + phosphate. The enzyme catalyses O-phospho-L-threonyl-[protein] + H2O = L-threonyl-[protein] + phosphate. Its function is as follows. Displays phosphatase activity for serine/threonine residues. Has apparently no phosphoglycerate mutase activity. The polypeptide is Serine/threonine-protein phosphatase Pgam5, mitochondrial (pgam-5) (Caenorhabditis elegans).